The sequence spans 392 residues: ATP phosphoribosyltransferase regulatory subunit (392 aa).

It belongs to the class-II aminoacyl-tRNA synthetase family. HisZ subfamily. As to quaternary structure, heteromultimer composed of HisG and HisZ subunits.

It is found in the cytoplasm. The protein operates within amino-acid biosynthesis; L-histidine biosynthesis; L-histidine from 5-phospho-alpha-D-ribose 1-diphosphate: step 1/9. Its function is as follows. Required for the first step of histidine biosynthesis. May allow the feedback regulation of ATP phosphoribosyltransferase activity by histidine. The chain is ATP phosphoribosyltransferase regulatory subunit from Prochlorococcus marinus (strain MIT 9211).